The following is a 144-amino-acid chain: Large ribosomal subunit protein uL15 (144 aa).

The segment at 1-54 (MRLNTLSPAEGSKKAGKRLGRGIGSGLGKTGGRGHKGQKSRSGGGVRRGFEGGQ) is disordered. The span at 21 to 31 (RGIGSGLGKTG) shows a compositional bias: gly residues.

This sequence belongs to the universal ribosomal protein uL15 family. Part of the 50S ribosomal subunit.

Binds to the 23S rRNA. This is Large ribosomal subunit protein uL15 from Escherichia coli (strain K12 / MC4100 / BW2952).